A 131-amino-acid chain; its full sequence is QRFP-like peptide (131 aa).

Residues 1 to 25 form the signal peptide; it reads MGVRVMRSRICVIGLLVLMLTQSEA. The propeptide occupies 26 to 94; sequence YSFREKSWRT…DDGISPADKR (69 aa). The tract at residues 48–131 is disordered; the sequence is RRDGGDQAPS…RESRRSFGSD (84 aa). Positions 97 to 106 are enriched in polar residues; that stretch reads MLQQLAQQLK. The residue at position 119 (Phe-119) is a Phenylalanine amide. Positions 120–131 are enriched in basic and acidic residues; sequence GKRESRRSFGSD. A propeptide spanning residues 123–131 is cleaved from the precursor; it reads ESRRSFGSD.

The protein belongs to the RFamide neuropeptide family.

It localises to the secreted. Its function is as follows. Ligand for the G-protein coupled receptor QRFPR. In Branchiostoma floridae (Florida lancelet), this protein is QRFP-like peptide.